The following is a 311-amino-acid chain: Aurora kinase (311 aa).

Positions 20–300 (FEIGRFLGRG…IEDILRHPFL (281 aa)) constitute a Protein kinase domain. K49 contributes to the ATP binding site. Residue D143 is the Proton acceptor of the active site. The tract at residues 189-216 (DFGWSVHHPTHGGRRRTQCGTLDYLPPE) is activation loop. The residue at position 205 (T205) is a Phosphothreonine; by autocatalysis. The short motif at 280–299 (MLIRSPEARISIEDILRHPF) is the Destruction (D)-box element.

It belongs to the protein kinase superfamily. Ser/Thr protein kinase family. Aurora subfamily. In terms of assembly, interacts with EB1 (via C-terminal residues 101-238). Post-translationally, phosphorylated in mitosis and cytokinesis. Activated by autophosphorylation at Thr-205.

The protein resides in the nucleus. It localises to the cytoplasm. Its subcellular location is the cytoskeleton. It is found in the microtubule organizing center. The protein localises to the centrosome. The protein resides in the spindle. It localises to the spindle pole. Its subcellular location is the nucleus membrane. It catalyses the reaction L-seryl-[protein] + ATP = O-phospho-L-seryl-[protein] + ADP + H(+). The enzyme catalyses L-threonyl-[protein] + ATP = O-phospho-L-threonyl-[protein] + ADP + H(+). With respect to regulation, activated by cell-cycle phase specific phosphorylation. Inhibited by ATP-competitive inhibitors N-[4-[[6-Methoxy-7-[3-(4-morpholinyl)propoxy]-4-quinazolinyl]amino]phenyl]benzamide (ZM447439) and cyclopropanecarboxylic acid-(3-(4-(3-trifluoromethylphenylamino)-pyrimidin-2-ylamino)-phenyl)-amide (CFPPA). Inhibition leads to reduced growth, increased cytokinesis, microtubular defects, and increased ploidy of the cells. Functionally, involved in regulation of the cell cycle. Required for mitotic cell division and cytokinesis. Based on its localization to centrosomes and spindle microtubules, as well as to various cytoskeletal components such as the median body, parental attachment disk, and anterior and posterior-lateral paraflagellar dense rods, may coordinate reorganization and segregation of tubulin-containing structures during mitosis and cytokinesis. May regulate microtubule disassembly by phosphorylating cytoskeletal proteins leading to their destabilization. Phosphorylates EB1 at 'Ser-148' in vitro. Phosphorylates histone H3 in vitro. This chain is Aurora kinase, found in Giardia intestinalis (strain ATCC 50803 / WB clone C6) (Giardia lamblia).